We begin with the raw amino-acid sequence, 749 residues long: Chaperone protein dnaK3 (749 aa).

Thr198 is subject to Phosphothreonine; by autocatalysis. Basic and acidic residues-rich tracts occupy residues Arg643–Arg653, Tyr661–Asn694, and Pro711–Ser724. The segment at Arg643–Phe749 is disordered. The span at Gly740 to Phe749 shows a compositional bias: acidic residues.

Belongs to the heat shock protein 70 family.

Acts as a chaperone. This is Chaperone protein dnaK3 (dnaK3) from Synechococcus elongatus (strain ATCC 33912 / PCC 7942 / FACHB-805) (Anacystis nidulans R2).